The sequence spans 227 residues: Abasic site processing protein YoaM (227 aa).

C2 functions as the Nucleophile in the catalytic mechanism. A Thiazolidine linkage to a ring-opened DNA abasic site modification is found at C2. E106 is a catalytic residue.

Belongs to the SOS response-associated peptidase family.

With respect to regulation, formation and reversal of DNA-protein cross-link depends on DNA context. Catalyzes formation of the thiazolidine linkage in presence of abasic sites in single-stranded DNA. Mediates the reversal of the thiazolidine cross-link in presence of double stranded DNA. Its function is as follows. Sensor of abasic sites in single-stranded DNA (ssDNA) required to preserve genome integrity by promoting error-free repair of abasic sites. Recognizes and binds abasic sites in ssDNA at replication forks and chemically modifies the lesion by forming a covalent cross-link with DNA: forms a stable thiazolidine linkage between a ring-opened abasic site and the alpha-amino and sulfhydryl substituents of its N-terminal catalytic cysteine residue. The DNA-protein cross-link is then reversed: able to catalyze the reversal of the thiazolidine cross-link and cycle between a cross-link and a non-cross-linked state depending on DNA context: mediates self-reversal of the thiazolidine cross-link in double stranded DNA. May act as a protease: mediates autocatalytic processing of its N-terminal methionine in order to expose the catalytic cysteine. This Bacillus subtilis (strain 168) protein is Abasic site processing protein YoaM (yoaM).